Consider the following 183-residue polypeptide: Holliday junction branch migration complex subunit RuvA (183 aa).

The interval 1 to 63 is domain I; it reads MIVGLIGVVE…EDAHLLYGFL (63 aa). Positions 64–139 are domain II; it reads EEGEKILFER…FFIQDENRPA (76 aa). Position 139 (A139) is a region of interest, flexible linker. A domain III region spans residues 139–183; sequence ARNEVFLALESLGFKSAEINQVLKTLKPNLSIEAAIKEALQQLRS.

Belongs to the RuvA family. Homotetramer. Forms an RuvA(8)-RuvB(12)-Holliday junction (HJ) complex. HJ DNA is sandwiched between 2 RuvA tetramers; dsDNA enters through RuvA and exits via RuvB. An RuvB hexamer assembles on each DNA strand where it exits the tetramer. Each RuvB hexamer is contacted by two RuvA subunits (via domain III) on 2 adjacent RuvB subunits; this complex drives branch migration. In the full resolvosome a probable DNA-RuvA(4)-RuvB(12)-RuvC(2) complex forms which resolves the HJ.

It is found in the cytoplasm. Its function is as follows. The RuvA-RuvB-RuvC complex processes Holliday junction (HJ) DNA during genetic recombination and DNA repair, while the RuvA-RuvB complex plays an important role in the rescue of blocked DNA replication forks via replication fork reversal (RFR). RuvA specifically binds to HJ cruciform DNA, conferring on it an open structure. The RuvB hexamer acts as an ATP-dependent pump, pulling dsDNA into and through the RuvAB complex. HJ branch migration allows RuvC to scan DNA until it finds its consensus sequence, where it cleaves and resolves the cruciform DNA. The chain is Holliday junction branch migration complex subunit RuvA from Helicobacter pylori (strain ATCC 700392 / 26695) (Campylobacter pylori).